The chain runs to 116 residues: MASTDSVYRPTPTPDHDTTVVVVVFVSLGCVMFLAFLAFVIWFLIKKRSRKHRERSEAVRVDEHFKMKEAIVEGPNGQKSVVLSVEDDVKIEDAIKREEKDLKKDGGVGSSVVSRS.

Topologically, residues 1-24 (MASTDSVYRPTPTPDHDTTVVVVV) are extracellular. A helical transmembrane segment spans residues 25-45 (FVSLGCVMFLAFLAFVIWFLI). The Cytoplasmic segment spans residues 46–116 (KKRSRKHRER…GVGSSVVSRS (71 aa)).

Interacts with CESA7/IRX3, a subunit of the secondary cell wall (SCW)-related cellulose synthase complex. Expressed preferentially in differentiating vessel elements in seedlings.

The protein localises to the cell membrane. It localises to the secreted. Its subcellular location is the cell wall. Functionally, involved in the secondary cell wall (SCW) formation of vessel elements (e.g. protoxylem and metaxylem), thus promoting tracheary element (TE) differentiation. The protein is Protein TRACHEARY ELEMENT DIFFERENTIATION-RELATED 6 of Arabidopsis thaliana (Mouse-ear cress).